The primary structure comprises 132 residues: Small ribosomal subunit protein uS8 (132 aa).

The protein belongs to the universal ribosomal protein uS8 family. As to quaternary structure, part of the 30S ribosomal subunit. Contacts proteins S5 and S12.

In terms of biological role, one of the primary rRNA binding proteins, it binds directly to 16S rRNA central domain where it helps coordinate assembly of the platform of the 30S subunit. The protein is Small ribosomal subunit protein uS8 of Gluconobacter oxydans (strain 621H) (Gluconobacter suboxydans).